A 131-amino-acid chain; its full sequence is Torsin-1A-interacting protein 2, isoform IFRG15 (131 aa).

The protein is Torsin-1A-interacting protein 2, isoform IFRG15 (TOR1AIP2) of Homo sapiens (Human).